Here is a 258-residue protein sequence, read N- to C-terminus: Regulatory protein RecX (258 aa).

It belongs to the RecX family.

The protein localises to the cytoplasm. Its function is as follows. Modulates RecA activity. In Streptococcus pyogenes serotype M2 (strain MGAS10270), this protein is Regulatory protein RecX.